We begin with the raw amino-acid sequence, 367 residues long: AdoMet-dependent heme synthase (367 aa).

The 224-residue stretch at 15–238 (DGSPTCKLIA…TSMHLKATCA (224 aa)) folds into the Radical SAM core domain. 3 residues coordinate [4Fe-4S] cluster: Cys31, Cys35, and Cys38.

It belongs to the radical SAM superfamily. It depends on [4Fe-4S] cluster as a cofactor.

The catalysed reaction is Fe-coproporphyrin III + 2 S-adenosyl-L-methionine = heme b + 2 5'-deoxyadenosine + 2 L-methionine + 2 CO2. Its pathway is porphyrin-containing compound metabolism; protoheme biosynthesis. Its function is as follows. Involved in siroheme-dependent heme b biosynthesis. Catalyzes the conversion of Fe-coproporphyrin III into heme by the oxidative decarboxylation of two propionate side chains. This is AdoMet-dependent heme synthase from Nitratidesulfovibrio vulgaris (strain ATCC 29579 / DSM 644 / CCUG 34227 / NCIMB 8303 / VKM B-1760 / Hildenborough) (Desulfovibrio vulgaris).